Consider the following 61-residue polypeptide: Metallothionein-2 (61 aa).

N-acetylmethionine is present on methionine 1. The segment at 1–29 is beta; the sequence is MDPNCSCATDGSCSCAGSCKCKECKCTTC. Positions 5, 7, 13, 15, 19, 21, 24, 26, 29, 33, 34, 36, 37, 41, 44, 48, 50, and 57 each coordinate a divalent metal cation. The alpha stretch occupies residues 30-61; that stretch reads KKSCCSCCPVGCAKCSQGCVCKEASDKCSCCA. Serine 58 bears the Phosphoserine mark. Positions 59 and 60 each coordinate a divalent metal cation.

This sequence belongs to the metallothionein superfamily. Type 1 family.

In terms of biological role, metallothioneins have a high content of cysteine residues that bind various heavy metals; these proteins are transcriptionally regulated by both heavy metals and glucocorticoids. The protein is Metallothionein-2 (MT2) of Cricetulus griseus (Chinese hamster).